The primary structure comprises 436 residues: C4-dicarboxylate transport protein 2 (436 aa).

Transmembrane regions (helical) follow at residues V14–A34, L45–M65, M77–V97, V142–G162, P198–V218, L223–A243, V290–L310, I331–G351, and I353–I373. A disordered region spans residues E414–V436.

Belongs to the dicarboxylate/amino acid:cation symporter (DAACS) (TC 2.A.23) family.

Its subcellular location is the cell inner membrane. Responsible for the transport of dicarboxylates such as succinate, fumarate, and malate from the periplasm across the membrane. The polypeptide is C4-dicarboxylate transport protein 2 (Pseudomonas paraeruginosa (strain DSM 24068 / PA7) (Pseudomonas aeruginosa (strain PA7))).